The following is a 624-amino-acid chain: Probable potassium transport system protein Kup (624 aa).

Transmembrane regions (helical) follow at residues 13–33 (LALG…LYTM), 52–72 (ILSL…VLVI), 102–122 (WIIM…SLIT), 139–159 (PALH…LFAI), 170–190 (LFGP…AIGI), 208–228 (FFMT…LAIT), 249–269 (WFGF…ALLL), 291–311 (MVAL…SGAF), 339–359 (IYIP…VLGF), 368–388 (AYGI…ALLM), 399–419 (TLVA…ANAV), and 421–441 (IPEG…ILVT).

Belongs to the HAK/KUP transporter (TC 2.A.72) family.

Its subcellular location is the cell inner membrane. The enzyme catalyses K(+)(in) + H(+)(in) = K(+)(out) + H(+)(out). In terms of biological role, transport of potassium into the cell. Likely operates as a K(+):H(+) symporter. The protein is Probable potassium transport system protein Kup of Thiobacillus denitrificans (strain ATCC 25259 / T1).